Reading from the N-terminus, the 253-residue chain is tRNA (guanine-N(1)-)-methyltransferase (253 aa).

S-adenosyl-L-methionine contacts are provided by residues glycine 113 and 133-138 (IGDYVL).

Belongs to the RNA methyltransferase TrmD family. Homodimer.

The protein localises to the cytoplasm. It catalyses the reaction guanosine(37) in tRNA + S-adenosyl-L-methionine = N(1)-methylguanosine(37) in tRNA + S-adenosyl-L-homocysteine + H(+). In terms of biological role, specifically methylates guanosine-37 in various tRNAs. This Chloroflexus aurantiacus (strain ATCC 29366 / DSM 635 / J-10-fl) protein is tRNA (guanine-N(1)-)-methyltransferase.